The sequence spans 275 residues: MPELPEVEVTRRGIEPFVAGRRVERVDVRTAMLRWPVPAGLAEQLRAREVLAVERRGKYLLFEVDAGWFIVHLGMTGTLRVLPAAGVPVAAKHDHIDWIFDEFVLRFRDPRRFGAVLWHAREAGDVHAHPLLASLGVEPFSPAFTGALLHARTRGRTVSVKQALLAGDMVVGVGNIYASESLFRAGIRPTTAAGKVSLPRYERLADAVRATLADAIERGGSTLRDFVGSNGESGYFQLDCFVYDRAGLPCRVCGTPIRQIVQGQRSTYFCPTCQR.

The active-site Schiff-base intermediate with DNA is the P2. The active-site Proton donor is E3. The Proton donor; for beta-elimination activity role is filled by K58. Residues H93, R111, and R156 each coordinate DNA. An FPG-type zinc finger spans residues 241–275 (FVYDRAGLPCRVCGTPIRQIVQGQRSTYFCPTCQR). The active-site Proton donor; for delta-elimination activity is R265.

Belongs to the FPG family. In terms of assembly, monomer. Requires Zn(2+) as cofactor.

It carries out the reaction Hydrolysis of DNA containing ring-opened 7-methylguanine residues, releasing 2,6-diamino-4-hydroxy-5-(N-methyl)formamidopyrimidine.. The catalysed reaction is 2'-deoxyribonucleotide-(2'-deoxyribose 5'-phosphate)-2'-deoxyribonucleotide-DNA = a 3'-end 2'-deoxyribonucleotide-(2,3-dehydro-2,3-deoxyribose 5'-phosphate)-DNA + a 5'-end 5'-phospho-2'-deoxyribonucleoside-DNA + H(+). Its function is as follows. Involved in base excision repair of DNA damaged by oxidation or by mutagenic agents. Acts as a DNA glycosylase that recognizes and removes damaged bases. Has a preference for oxidized purines, such as 7,8-dihydro-8-oxoguanine (8-oxoG). Has AP (apurinic/apyrimidinic) lyase activity and introduces nicks in the DNA strand. Cleaves the DNA backbone by beta-delta elimination to generate a single-strand break at the site of the removed base with both 3'- and 5'-phosphates. The chain is Formamidopyrimidine-DNA glycosylase from Burkholderia ambifaria (strain MC40-6).